Reading from the N-terminus, the 252-residue chain is Chitooligosaccharide deacetylase (252 aa).

His61 and His125 together coordinate Mg(2+).

It belongs to the YdjC deacetylase family. ChbG subfamily. Homodimer. Mg(2+) serves as cofactor.

The protein localises to the cytoplasm. The enzyme catalyses N,N'-diacetylchitobiose + H2O = N-acetyl-beta-D-glucosaminyl-(1-&gt;4)-D-glucosamine + acetate. It carries out the reaction diacetylchitobiose-6'-phosphate + H2O = N'-monoacetylchitobiose-6'-phosphate + acetate. It participates in glycan degradation; chitin degradation. In terms of biological role, involved in the degradation of chitin. ChbG is essential for growth on the acetylated chitooligosaccharides chitobiose and chitotriose but is dispensable for growth on cellobiose and chitosan dimer, the deacetylated form of chitobiose. Deacetylation of chitobiose-6-P and chitotriose-6-P is necessary for both the activation of the chb promoter by the regulatory protein ChbR and the hydrolysis of phosphorylated beta-glucosides by the phospho-beta-glucosidase ChbF. Catalyzes the removal of only one acetyl group from chitobiose-6-P to yield monoacetylchitobiose-6-P, the inducer of ChbR and the substrate of ChbF. The chain is Chitooligosaccharide deacetylase from Escherichia coli O139:H28 (strain E24377A / ETEC).